The following is a 255-amino-acid chain: tRNA (guanine-N(1)-)-methyltransferase (255 aa).

S-adenosyl-L-methionine is bound by residues Gly-113 and 133 to 138; that span reads IGDYVL.

It belongs to the RNA methyltransferase TrmD family. Homodimer.

The protein resides in the cytoplasm. The enzyme catalyses guanosine(37) in tRNA + S-adenosyl-L-methionine = N(1)-methylguanosine(37) in tRNA + S-adenosyl-L-homocysteine + H(+). In terms of biological role, specifically methylates guanosine-37 in various tRNAs. The chain is tRNA (guanine-N(1)-)-methyltransferase from Chloroflexus aggregans (strain MD-66 / DSM 9485).